A 565-amino-acid polypeptide reads, in one-letter code: Sulfite reductase [NADPH] hemoprotein beta-component (565 aa).

Positions 429, 435, 474, and 478 each coordinate [4Fe-4S] cluster. Cys-478 lines the siroheme pocket.

Belongs to the nitrite and sulfite reductase 4Fe-4S domain family. In terms of assembly, alpha(8)-beta(8). The alpha component is a flavoprotein, the beta component is a hemoprotein. Requires siroheme as cofactor. [4Fe-4S] cluster is required as a cofactor.

It catalyses the reaction hydrogen sulfide + 3 NADP(+) + 3 H2O = sulfite + 3 NADPH + 4 H(+). It participates in sulfur metabolism; hydrogen sulfide biosynthesis; hydrogen sulfide from sulfite (NADPH route): step 1/1. In terms of biological role, component of the sulfite reductase complex that catalyzes the 6-electron reduction of sulfite to sulfide. This is one of several activities required for the biosynthesis of L-cysteine from sulfate. This chain is Sulfite reductase [NADPH] hemoprotein beta-component, found in Shewanella baltica (strain OS155 / ATCC BAA-1091).